A 197-amino-acid polypeptide reads, in one-letter code: Dephospho-CoA kinase (197 aa).

The 196-residue stretch at 2 to 197 (IIGLTGGIGS…HTKYMELLNE (196 aa)) folds into the DPCK domain. 10–15 (GSGKSA) is a binding site for ATP.

This sequence belongs to the CoaE family.

Its subcellular location is the cytoplasm. It catalyses the reaction 3'-dephospho-CoA + ATP = ADP + CoA + H(+). It functions in the pathway cofactor biosynthesis; coenzyme A biosynthesis; CoA from (R)-pantothenate: step 5/5. In terms of biological role, catalyzes the phosphorylation of the 3'-hydroxyl group of dephosphocoenzyme A to form coenzyme A. This Gamma-proteobacterium EBAC31A08 protein is Dephospho-CoA kinase.